The sequence spans 93 residues: Large ribosomal subunit protein uL23cy (93 aa).

It belongs to the universal ribosomal protein uL23 family. As to quaternary structure, part of the 50S ribosomal subunit.

It localises to the plastid. Its subcellular location is the chloroplast. In terms of biological role, binds to 23S rRNA. The polypeptide is Large ribosomal subunit protein uL23cy (rpl23-B) (Sorghum bicolor (Sorghum)).